The primary structure comprises 580 residues: Myb-like protein C (580 aa).

Disordered regions lie at residues 1 to 58 (MTMI…YGSN), 73 to 101 (QYSI…TLLS), 121 to 203 (NVYN…SSTN), and 354 to 380 (SDND…NPPN). Composition is skewed to low complexity over residues 20–47 (NNNN…NNNN), 87–101 (NSTM…TLLS), and 126–203 (PHQS…SSTN). Basic residues predominate over residues 361-371 (KKKRERIRKSV). HTH myb-type domains are found at residues 368–430 (RKSV…CPAI) and 431–482 (RKGS…SREV). DNA-binding regions (H-T-H motif) lie at residues 402 to 426 (WKKI…KRVL) and 454 to 478 (WKNV…KSCM). The Myb-like domain occupies 484-546 (WSSREDEILQ…ECKTRYFQLN (63 aa)).

It localises to the nucleus. In terms of biological role, transcription activator required for the culmination, at the time of the fruiting body formation. Regulates genes involved in the cell differentiation within the fruiting body. The protein is Myb-like protein C (mybC) of Dictyostelium discoideum (Social amoeba).